We begin with the raw amino-acid sequence, 493 residues long: Guanosine-5'-triphosphate,3'-diphosphate pyrophosphatase (493 aa).

The protein belongs to the GppA/Ppx family. GppA subfamily.

It catalyses the reaction guanosine 3'-diphosphate 5'-triphosphate + H2O = guanosine 3',5'-bis(diphosphate) + phosphate + H(+). The protein operates within purine metabolism; ppGpp biosynthesis; ppGpp from GTP: step 2/2. In terms of biological role, catalyzes the conversion of pppGpp to ppGpp. Guanosine pentaphosphate (pppGpp) is a cytoplasmic signaling molecule which together with ppGpp controls the 'stringent response', an adaptive process that allows bacteria to respond to amino acid starvation, resulting in the coordinated regulation of numerous cellular activities. This chain is Guanosine-5'-triphosphate,3'-diphosphate pyrophosphatase, found in Salmonella gallinarum (strain 287/91 / NCTC 13346).